Consider the following 309-residue polypeptide: ATP synthase gamma chain (309 aa).

It belongs to the ATPase gamma chain family. In terms of assembly, F-type ATPases have 2 components, CF(1) - the catalytic core - and CF(0) - the membrane proton channel. CF(1) has five subunits: alpha(3), beta(3), gamma(1), delta(1), epsilon(1). CF(0) has three main subunits: a, b and c.

The protein localises to the cell membrane. In terms of biological role, produces ATP from ADP in the presence of a proton gradient across the membrane. The gamma chain is believed to be important in regulating ATPase activity and the flow of protons through the CF(0) complex. The polypeptide is ATP synthase gamma chain (Salinispora arenicola (strain CNS-205)).